Reading from the N-terminus, the 605-residue chain is LysM domain receptor-like kinase 10 (605 aa).

The signal sequence occupies residues 1-20; it reads MFSLPALLIGACAFAAAAVA. The Extracellular segment spans residues 21-245; it reads ASGDGCRAGC…GMGNSLSGGA (225 aa). 3 cysteine pairs are disulfide-bonded: Cys-26-Cys-89, Cys-30-Cys-161, and Cys-87-Cys-159. Asn-44 is a glycosylation site (N-linked (GlcNAc...) asparagine). Chitin is bound by residues 115–121 and 142–148; these read GGDTYDA and PPGRIPG. N-linked (GlcNAc...) asparagine glycans are attached at residues Asn-154 and Asn-158. Residues 174 to 221 enclose the LysM domain; that stretch reads LTYPLWDGETLESVAAQYGFSSPAEMELIRRYNPGMGGVSGKGIVFIP. A glycan (N-linked (GlcNAc...) asparagine) is linked at Asn-226. Residues 246-266 form a helical membrane-spanning segment; the sequence is IAGIVIACIAIFIVAIWLIIM. Topologically, residues 267–605 are cytoplasmic; it reads FYRWQKFRKA…DLRDMDYHPF (339 aa). At Ser-278 the chain carries Phosphoserine. The region spanning 317–591 is the Protein kinase domain; it reads FSMEHKIGQG…RSVVVALMAL (275 aa). ATP is bound by residues 323–331 and Lys-344; that span reads IGQGGFGSV. The Proton acceptor role is filled by Asp-436.

The protein belongs to the protein kinase superfamily. Ser/Thr protein kinase family.

It is found in the cell membrane. It carries out the reaction L-seryl-[protein] + ATP = O-phospho-L-seryl-[protein] + ADP + H(+). The catalysed reaction is L-threonyl-[protein] + ATP = O-phospho-L-threonyl-[protein] + ADP + H(+). The chain is LysM domain receptor-like kinase 10 from Oryza sativa subsp. japonica (Rice).